The sequence spans 398 residues: GTPase Obg (398 aa).

The region spanning 1-159 (MKFVDEAPIS…RNLKLELKVL (159 aa)) is the Obg domain. Positions 128–148 (TRFKSSTNRVPRKTTPGTEGE) are disordered. Positions 160 to 333 (ADVGMLGLPN…LSGKIMDHLE (174 aa)) constitute an OBG-type G domain. Residues 166-173 (GLPNAGKS), 191-195 (FTTLV), 213-216 (DIPG), 283-286 (NKID), and 314-316 (SAL) each bind GTP. Serine 173 and threonine 193 together coordinate Mg(2+).

It belongs to the TRAFAC class OBG-HflX-like GTPase superfamily. OBG GTPase family. Monomer. The cofactor is Mg(2+).

The protein resides in the cytoplasm. In terms of biological role, an essential GTPase which binds GTP, GDP and possibly (p)ppGpp with moderate affinity, with high nucleotide exchange rates and a fairly low GTP hydrolysis rate. Plays a role in control of the cell cycle, stress response, ribosome biogenesis and in those bacteria that undergo differentiation, in morphogenesis control. The chain is GTPase Obg from Cellvibrio japonicus (strain Ueda107) (Pseudomonas fluorescens subsp. cellulosa).